Reading from the N-terminus, the 391-residue chain is Dual-specificity RNA methyltransferase RlmN (391 aa).

E115 (proton acceptor) is an active-site residue. One can recognise a Radical SAM core domain in the interval 121–363 (EENRGTLCIS…SPIRTPRGED (243 aa)). An intrachain disulfide couples C128 to C368. 3 residues coordinate [4Fe-4S] cluster: C135, C139, and C142. S-adenosyl-L-methionine is bound by residues 194-195 (GE), S226, 248-250 (SFH), and N325. C368 acts as the S-methylcysteine intermediate in catalysis.

This sequence belongs to the radical SAM superfamily. RlmN family. [4Fe-4S] cluster serves as cofactor.

Its subcellular location is the cytoplasm. It carries out the reaction adenosine(2503) in 23S rRNA + 2 reduced [2Fe-2S]-[ferredoxin] + 2 S-adenosyl-L-methionine = 2-methyladenosine(2503) in 23S rRNA + 5'-deoxyadenosine + L-methionine + 2 oxidized [2Fe-2S]-[ferredoxin] + S-adenosyl-L-homocysteine. It catalyses the reaction adenosine(37) in tRNA + 2 reduced [2Fe-2S]-[ferredoxin] + 2 S-adenosyl-L-methionine = 2-methyladenosine(37) in tRNA + 5'-deoxyadenosine + L-methionine + 2 oxidized [2Fe-2S]-[ferredoxin] + S-adenosyl-L-homocysteine. Specifically methylates position 2 of adenine 2503 in 23S rRNA and position 2 of adenine 37 in tRNAs. m2A2503 modification seems to play a crucial role in the proofreading step occurring at the peptidyl transferase center and thus would serve to optimize ribosomal fidelity. The sequence is that of Dual-specificity RNA methyltransferase RlmN from Paracoccus denitrificans (strain Pd 1222).